Consider the following 309-residue polypeptide: HPr kinase/phosphorylase (309 aa).

Active-site residues include His138 and Lys159. Gly153–Ser160 is a binding site for ATP. Ser160 serves as a coordination point for Mg(2+). Asp177 acts as the Proton acceptor; for phosphorylation activity. Proton donor; for dephosphorylation activity in catalysis. Positions Leu201 to Asp210 are important for the catalytic mechanism of both phosphorylation and dephosphorylation. Glu202 contacts Mg(2+). Arg243 is an active-site residue. An important for the catalytic mechanism of dephosphorylation region spans residues Pro264–Arg269.

The protein belongs to the HPrK/P family. As to quaternary structure, homohexamer. It depends on Mg(2+) as a cofactor.

The enzyme catalyses [HPr protein]-L-serine + ATP = [HPr protein]-O-phospho-L-serine + ADP + H(+). The catalysed reaction is [HPr protein]-O-phospho-L-serine + phosphate + H(+) = [HPr protein]-L-serine + diphosphate. Functionally, catalyzes the ATP- as well as the pyrophosphate-dependent phosphorylation of a specific serine residue in HPr, a phosphocarrier protein of the phosphoenolpyruvate-dependent sugar phosphotransferase system (PTS). HprK/P also catalyzes the pyrophosphate-producing, inorganic phosphate-dependent dephosphorylation (phosphorolysis) of seryl-phosphorylated HPr (P-Ser-HPr). The two antagonistic activities of HprK/P are regulated by several intracellular metabolites, which change their concentration in response to the absence or presence of rapidly metabolisable carbon sources (glucose, fructose, etc.) in the growth medium. Therefore, by controlling the phosphorylation state of HPr, HPrK/P is a sensor enzyme that plays a major role in the regulation of carbon metabolism and sugar transport: it mediates carbon catabolite repression (CCR), and regulates PTS-catalyzed carbohydrate uptake and inducer exclusion. The protein is HPr kinase/phosphorylase of Streptococcus thermophilus (strain ATCC BAA-491 / LMD-9).